The following is a 573-amino-acid chain: MDGVCKSPQRLLFVLVSCFGLVQSYKNGLVSSVCGSMMPNHGANAQISSPPFTVTADKTTFKEGDQITVTLNSQTGYQFEGFMLQARQVGSSSSIGTFSVTASNMQLLTCDGVSARSVSHTSNSKKSSIQAKWTAPTSGQLGNIQFSVTFVKSDDTFWVGVKSSAVVYNGAGTTGTSTTPATVAPTVASIPGCGTTKVCFSQPNNCDPTTSTGCYFVAVQASSDQSEMRIEMFGPADGYVAIGFSDDQQMGNDDVYICGKDNNGNLQVQHAFNSGRSRPAILSLGNVTDILTAVTNGNINCSFISRNTISTASRAATTNEYYLMIAAGSSSQGNIQFHTNKYVTSTKVNLLNPSVVITSEEEFPPMVKAHGCLMLISWMATGSIGMIIARYLKGVAKGQGCFGKDFWFVAHVSLMTLSIIATAIAFIIVFVSAGDWAGGAHPVLGCLVMILSLIQPIVAAFRCEPQHERRFVFNWAHSCNAFAIKCLAVAAIFTGLALFEEYDSDGWMLKVMGGYLAWEALMYILQDLNLRAKKKDSQLCSCEPMRPETILLFLFIIGNLAFLIALLVGIGSA.

A helical membrane pass occupies residues 4 to 24 (VCKSPQRLLFVLVSCFGLVQS). The region spanning 15-181 (LVSCFGLVQS…GTTGTSTTPA (167 aa)) is the Reelin domain. One can recognise a DOMON domain in the interval 213-328 (GCYFVAVQAS…NEYYLMIAAG (116 aa)). Residues N286 and N300 are each glycosylated (N-linked (GlcNAc...) asparagine). A Cytochrome b561 domain is found at 332–532 (QGNIQFHTNK…YILQDLNLRA (201 aa)). The helical transmembrane segment at 369 to 389 (AHGCLMLISWMATGSIGMIIA) threads the bilayer. The heme b site is built by H370 and H411. 2 helical membrane-spanning segments follow: residues 414-434 (LMTLSIIATAIAFIIVFVSAG) and 441-461 (HPVLGCLVMILSLIQPIVAAF). Residues H441 and H477 each coordinate heme b. 3 helical membrane passes run 479 to 499 (CNAFAIKCLAVAAIFTGLALF), 506 to 526 (GWMLKVMGGYLAWEALMYILQ), and 550 to 570 (ILLFLFIIGNLAFLIALLVGI).

The protein belongs to the FRRS1 family. Heme b is required as a cofactor.

It localises to the membrane. Putative ferric-chelate reductases reduce Fe(3+) to Fe(2+) before its transport from the endosome to the cytoplasm. The polypeptide is Putative ferric-chelate reductase 1 (frrs1) (Danio rerio (Zebrafish)).